A 167-amino-acid chain; its full sequence is Transcription factor E (167 aa).

An HTH TFE/IIEalpha-type domain is found at 8–90 (NDKVIRGYLI…LWHLDFSDVE (83 aa)).

This sequence belongs to the TFE family. As to quaternary structure, monomer. Interaction with RNA polymerase subunits RpoF and RpoE is necessary for Tfe stimulatory transcription activity. Able to interact with Tbp and RNA polymerase in the absence of DNA promoter. Interacts both with the preinitiation and elongation complexes.

Functionally, transcription factor that plays a role in the activation of archaeal genes transcribed by RNA polymerase. Facilitates transcription initiation by enhancing TATA-box recognition by TATA-box-binding protein (Tbp), and transcription factor B (Tfb) and RNA polymerase recruitment. Not absolutely required for transcription in vitro, but particularly important in cases where Tbp or Tfb function is not optimal. It dynamically alters the nucleic acid-binding properties of RNA polymerases by stabilizing the initiation complex and destabilizing elongation complexes. Seems to translocate with the RNA polymerase following initiation and acts by binding to the non template strand of the transcription bubble in elongation complexes. In Methanosarcina acetivorans (strain ATCC 35395 / DSM 2834 / JCM 12185 / C2A), this protein is Transcription factor E.